The sequence spans 70 residues: Large ribosomal subunit protein eL38 (70 aa).

Belongs to the eukaryotic ribosomal protein eL38 family.

The protein is Large ribosomal subunit protein eL38 (RpL38) of Bombyx mori (Silk moth).